The chain runs to 131 residues: Small ribosomal subunit protein uS8 (131 aa).

It belongs to the universal ribosomal protein uS8 family. In terms of assembly, part of the 30S ribosomal subunit. Contacts proteins S5 and S12.

Its function is as follows. One of the primary rRNA binding proteins, it binds directly to 16S rRNA central domain where it helps coordinate assembly of the platform of the 30S subunit. In Ruthia magnifica subsp. Calyptogena magnifica, this protein is Small ribosomal subunit protein uS8.